The primary structure comprises 71 residues: MSQLKITQVRSTIGARWKQRESLRTLGLRRIRHSVIREDNPQTRGLIAVVSHLVEVAPADASSAGTGGSKK.

This sequence belongs to the universal ribosomal protein uL30 family. In terms of assembly, part of the 50S ribosomal subunit.

In Mycolicibacterium paratuberculosis (strain ATCC BAA-968 / K-10) (Mycobacterium paratuberculosis), this protein is Large ribosomal subunit protein uL30.